The chain runs to 856 residues: Villin-like protein (856 aa).

Gelsolin-like repeat units lie at residues 22 to 74 (RKMV…EAQG), 146 to 186 (VSAT…SEKA), 263 to 307 (LVVL…QERK), 401 to 450 (LHRQ…DEIE), 521 to 561 (TRTM…DQRE), and 624 to 665 (LVLA…WKEA). The segment at 762–796 (SQDSSENDLVRSPKSAGSRTSSSVSSTSATINGGL) is disordered. Residues 776-791 (SAGSRTSSSVSSTSAT) are compositionally biased toward low complexity. The HP domain maps to 790–856 (ATINGGLRRE…RQEKKQLGFF (67 aa)).

This sequence belongs to the villin/gelsolin family. Ubiquitously expressed in 16 tissues examined.

Its function is as follows. Possible tumor suppressor. This Homo sapiens (Human) protein is Villin-like protein (VILL).